The primary structure comprises 291 residues: MQFTFEQIFIAMLLTLFAGFSTAIGSIIAFFSRKDDLRVLSLGLGFSAGVMIYISFMEILPTALKDFKNHYDSHWAELLGLACFFGGILISLLIDKLIPEDVNPHEPKEDLSELKICPLPQKGQNPPKFHPGEKLHQINTKALKRTGIFTALAIAIHNFPEGFATFISSLDNLTLGIAIAIAVAIHNIPEGLAVSLPIYHATGDKKKAFIYSALSGFAEPLGAFVGALILLPFIGDLTLAISFAVIAGIMVFISLDELLPAAKTYDKAHDSLYGLIAGMAIMALSLNLLGQ.

The next 8 helical transmembrane spans lie at Ile8 to Ile28, Val39 to Ile59, His74 to Ile94, Gly147 to Ile167, Thr174 to Val194, Phe209 to Ile229, Phe233 to Ile253, and Ser271 to Gln291. 2 residues coordinate Fe(2+): Asn158 and Glu161. 2 residues coordinate Zn(2+): Glu161 and His186. The Fe(2+) site is built by Asn187, Glu190, and Glu219. Glu190 contributes to the Zn(2+) binding site.

It belongs to the ZIP transporter (TC 2.A.5) family. ZupT subfamily.

Its subcellular location is the cell inner membrane. It carries out the reaction Zn(2+)(in) = Zn(2+)(out). Mediates zinc uptake. May also transport other divalent cations. The polypeptide is Zinc transporter ZupT (Campylobacter jejuni subsp. jejuni serotype O:2 (strain ATCC 700819 / NCTC 11168)).